Consider the following 393-residue polypeptide: Probable protein phosphatase 2C 68 (393 aa).

A PPM-type phosphatase domain is found at aspartate 56 to isoleucine 359. Mn(2+)-binding residues include aspartate 87, glycine 88, aspartate 291, and aspartate 350.

This sequence belongs to the PP2C family. Mg(2+) serves as cofactor. Requires Mn(2+) as cofactor.

It catalyses the reaction O-phospho-L-seryl-[protein] + H2O = L-seryl-[protein] + phosphate. It carries out the reaction O-phospho-L-threonyl-[protein] + H2O = L-threonyl-[protein] + phosphate. Its function is as follows. May dephosphorylate and repress plasma membrane H(+)-ATPases (PM H(+)-ATPases, e.g. AHA1 and AHA2), thus influencing negatively plant growth and fitness. This Arabidopsis thaliana (Mouse-ear cress) protein is Probable protein phosphatase 2C 68.